A 320-amino-acid polypeptide reads, in one-letter code: Putative fatty acid elongase 3 (320 aa).

The N-linked (GlcNAc...) asparagine glycan is linked to Asn-14. The next 6 membrane-spanning stretches (helical) occupy residues 33 to 53 (WMQN…AVIF), 67 to 87 (LDTP…LGFL), 120 to 140 (FWTE…IFIV), 145 to 165 (PLIF…WHAY), 203 to 223 (MAMV…IIGV), and 242 to 262 (LGLC…FFYH).

It belongs to the ELO family.

It is found in the membrane. It carries out the reaction a very-long-chain acyl-CoA + malonyl-CoA + H(+) = a very-long-chain 3-oxoacyl-CoA + CO2 + CoA. It participates in lipid metabolism; fatty acid biosynthesis. Functionally, could be implicated in synthesis of very long chain fatty acids. May be required for normally rapid growth. This is Putative fatty acid elongase 3 (elo-3) from Caenorhabditis elegans.